Consider the following 1492-residue polypeptide: Copper-transporting ATPase 1 (1492 aa).

Over 1–645 (MEPNMDANSI…KREIKQWRGS (645 aa)) the chain is Cytoplasmic. HMA domains lie at 8–74 (NSIT…FDAL) and 85–151 (TNTV…LDMG). Cu(+)-binding residues include threonine 18, cysteine 19, and cysteine 22. Threonine 152 carries the post-translational modification Phosphothreonine. The 67-residue stretch at 171–237 (VLLKMRVEGM…QIEAVGFPAF (67 aa)) folds into the HMA 3 domain. Residues cysteine 182 and cysteine 185 each coordinate Cu(+). Serine 270 bears the Phosphoserine mark. An HMA 4 domain is found at 277–343 (SAITFTIDGM…AIEAVSPGQY (67 aa)). The Cu(+) site is built by cysteine 288 and cysteine 291. Phosphothreonine is present on threonine 327. 4 positions are modified to phosphoserine: serine 339, serine 353, serine 357, and serine 362. 3 HMA domains span residues 377–443 (QEVV…FDAV), 480–546 (NKCY…FGAV), and 556–622 (GILE…FEAS). Residues cysteine 388, cysteine 391, cysteine 491, cysteine 494, cysteine 567, and cysteine 570 each coordinate Cu(+). A helical transmembrane segment spans residues 646–667 (FLVSLFFCIPVMGLMIYMMVMD). The Extracellular segment spans residues 668 to 706 (HHLATLNHNQNMSNEEMINMHSSMFLERQILPGLSIMNL). N-linked (GlcNAc...) asparagine glycosylation is present at asparagine 678. The helical transmembrane segment at 707–726 (LSLLLCLPVQFCGGWYFYIQ) threads the bilayer. Topologically, residues 727-733 (AYKALRH) are cytoplasmic. The chain crosses the membrane as a helical span at residues 734–754 (KTANMDVLIVLATTIAFAYSL). At 755-773 (VILLVAMYERAKVNPITFF) the chain is on the extracellular side. Residues 774-794 (DTPPMLFVFIALGRWLEHIAK) form a helical membrane-spanning segment. At 795-927 (GKTSEALAKL…SKAPIQQFAD (133 aa)) the chain is on the cytoplasmic side. The helical transmembrane segment at 928 to 951 (KLSGYFVPFIVLVSIVTLLVWIII) threads the bilayer. The Extracellular segment spans residues 952 to 981 (GFQNFEIVEAYFPGYNRSISRTETIIRFAF). The helical transmembrane segment at 982 to 1003 (QASITVLCIACPCSLGLATPTA) threads the bilayer. Over 1004–1348 (VMVGTGVGAQ…LSRKTVKRIR (345 aa)) the chain is Cytoplasmic. Aspartate 1036 acts as the 4-aspartylphosphate intermediate in catalysis. Glutamate 1073 is an ATP binding site. Phosphothreonine is present on threonine 1204. The Mg(2+) site is built by aspartate 1293 and aspartate 1297. A helical transmembrane segment spans residues 1349 to 1366 (INFVFALIYNLIGIPIAA). The Extracellular segment spans residues 1367–1377 (GVFLPIGLVLQ). The helical transmembrane segment at 1378–1397 (PWMGSAAMAASSVSVVLSSL) threads the bilayer. Residues 1398 to 1492 (FLKLYRKPTY…DFREDDDTTL (95 aa)) lie on the Cytoplasmic side of the membrane. A phosphoserine mark is found at serine 1422, serine 1424, serine 1452, serine 1455, and serine 1458. Positions 1459–1460 (LL) match the Endocytosis signal motif. Residues serine 1461, serine 1465, serine 1468, and serine 1478 each carry the phosphoserine modification. The segment at 1478-1492 (SLLVGDFREDDDTTL) is PDZD11-binding. Positions 1479 to 1480 (LL) match the Endocytosis signal motif.

The protein belongs to the cation transport ATPase (P-type) (TC 3.A.3) family. Type IB subfamily. In terms of assembly, monomer. Interacts with PDZD11. Interacts with ATOX1 and COMMD1. Interacts with TYRP1. Directly interacts with SOD3; this interaction is copper-dependent and is required for SOD3 activity. Expressed in hippocampal neuron (at protein level). Expressed in anterior pituitary gland (at protein level).

Its subcellular location is the golgi apparatus. The protein localises to the trans-Golgi network membrane. The protein resides in the cell membrane. It localises to the melanosome membrane. It is found in the early endosome membrane. Its subcellular location is the cell projection. The protein localises to the axon. The protein resides in the dendrite. It localises to the postsynaptic density. The catalysed reaction is Cu(+)(in) + ATP + H2O = Cu(+)(out) + ADP + phosphate + H(+). In terms of biological role, ATP-driven copper (Cu(+)) ion pump that plays an important role in intracellular copper ion homeostasis. Within a catalytic cycle, acquires Cu(+) ion from donor protein on the cytoplasmic side of the membrane and delivers it to acceptor protein on the lumenal side. The transfer of Cu(+) ion across the membrane is coupled to ATP hydrolysis and is associated with a transient phosphorylation that shifts the pump conformation from inward-facing to outward-facing state. Under physiological conditions, at low cytosolic copper concentration, it is localized at the trans-Golgi network (TGN) where it transfers Cu(+) ions to cuproenzymes of the secretory pathway. Upon elevated cytosolic copper concentrations, it relocalizes to the plasma membrane where it is responsible for the export of excess Cu(+) ions. May play a dual role in neuron function and survival by regulating cooper efflux and neuronal transmission at the synapse as well as by supplying Cu(+) ions to enzymes such as PAM, TYR and SOD3. In the melanosomes of pigmented cells, provides copper cofactor to TYR to form an active TYR holoenzyme for melanin biosynthesis. This chain is Copper-transporting ATPase 1, found in Rattus norvegicus (Rat).